The chain runs to 330 residues: Protein IN CHLOROPLAST ATPASE BIOGENESIS, chloroplastic (330 aa).

The N-terminal 35 residues, 1-35 (MGSISMHITPSTALPIRHFRARVSCCSSGHVSFIK), are a transit peptide targeting the chloroplast.

As to quaternary structure, interacts with ATPC1.

The protein localises to the plastid. Its subcellular location is the chloroplast stroma. Functionally, involved in the assembly of the F(1) ATP synthase in chloroplast thylakoid membranes. Functions downstream of the CPN60 chaperones to promote assembly of the catalytically active core of the chloroplast ATP synthase. Assists the assembly of the ATP synthase gamma subunit into the active F(1) core downstream of CPN60-mediated folding, which is critical for the biogenesis of the chloroplast ATP synthase. The chain is Protein IN CHLOROPLAST ATPASE BIOGENESIS, chloroplastic from Arabidopsis thaliana (Mouse-ear cress).